Consider the following 337-residue polypeptide: tRNA N6-adenosine threonylcarbamoyltransferase (337 aa).

Residues His-111 and His-115 each contribute to the Fe cation site. Residues 134-138 (LVSGG), Asp-167, Gly-180, and Asn-272 contribute to the substrate site. Asp-300 serves as a coordination point for Fe cation.

This sequence belongs to the KAE1 / TsaD family. It depends on Fe(2+) as a cofactor.

It localises to the cytoplasm. The enzyme catalyses L-threonylcarbamoyladenylate + adenosine(37) in tRNA = N(6)-L-threonylcarbamoyladenosine(37) in tRNA + AMP + H(+). Functionally, required for the formation of a threonylcarbamoyl group on adenosine at position 37 (t(6)A37) in tRNAs that read codons beginning with adenine. Is involved in the transfer of the threonylcarbamoyl moiety of threonylcarbamoyl-AMP (TC-AMP) to the N6 group of A37, together with TsaE and TsaB. TsaD likely plays a direct catalytic role in this reaction. The polypeptide is tRNA N6-adenosine threonylcarbamoyltransferase (Shewanella amazonensis (strain ATCC BAA-1098 / SB2B)).